Reading from the N-terminus, the 591-residue chain is MNKIYRIIWNSALNAWVVVSELTRNHTKRASATVKTAVLATLLFATVQASANNEEQEEDLYLDPVQRTVAVLIVNSDKEGTGEKEKVEENSDWAVYFNEKGVLTAREITLKAGDNLKIKQNGTNFTYSLKKDLTDLTSVGTEKLSFSANGNKVNITSDTKGLNFAKETAGTNGDTTVHLNGIGSTLTDTLLNTGATTNVTNDNVTDDEKKRAASVKDVLNAGWNIKGVKPGTTASDNVDFVRTYDTVEFLSADTKTTTVNVESKDNGKKTEVKIGAKTSVIKEKDGKLVTGKDKGENGSSTDEGEGLVTAKEVIDAVNKAGWRMKTTTANGQTGQADKFETVTSGTNVTFASGKGTTATVSKDDQGNITVMYDVNVGDALNVNQLQNSGWNLDSKAVAGSSGKVISGNVSPSKGKMDETVNINAGNNIEITRNGKNIDIATSMTPQFSSVSLGAGADAPTLSVDGDALNVGSKKDNKPVRITNVAPGVKEGDVTNVAQLKGVAQNLNNRIDNVDGNARAGIAQAIATAGLVQAYLPGKSMMAIGGGTYRGEAGYAIGYSSISDGGNWIIKGTASGNSRGHFGASASVGYQW.

The N-terminal stretch at 1-51 (MNKIYRIIWNSALNAWVVVSELTRNHTKRASATVKTAVLATLLFATVQASA) is a signal peptide. The surface exposed passenger domain stretch occupies residues 52–503 (NNEEQEEDLY…TNVAQLKGVA (452 aa)). Residues 504–591 (QNLNNRIDNV…GASASVGYQW (88 aa)) form a translocator domain region. Beta stranded transmembrane passes span 537–547 (GKSMMAIGGGT), 551–561 (EAGYAIGYSSI), 570–576 (KGTASGN), and 580–591 (HFGASASVGYQW).

This sequence belongs to the autotransporter-2 (AT-2) (TC 1.B.40) family. As to quaternary structure, homotrimer.

Its subcellular location is the cell surface. It is found in the cell outer membrane. In terms of biological role, involved in adhesion of capsulated meningococci to host epithelial cells. Interacts with laminin and heparan sulfate, promoting the adherence to the extracellular matrix (ECM) components. This is Autotransporter adhesin NhhA from Neisseria meningitidis serogroup B (strain ATCC BAA-335 / MC58).